The following is a 518-amino-acid chain: Circadian clock oscillator protein KaiC (518 aa).

The 247-residue stretch at 1–247 (MTNLPEHQSS…FTINNGINIF (247 aa)) folds into the KaiC 1 domain. The ATP site is built by Ser49, Gly50, Thr51, Gly52, Lys53, Thr54, and Leu55. Residue Thr54 coordinates Mg(2+). Catalysis depends on Glu78, which acts as the Proton acceptor in CI (KaiC 1). Ser90 serves as a coordination point for ATP. Residues 116-123 (QEVAGDFD) are B-loop, required to bind KaiB and SasA. Residues Lys225, Leu226, Arg227, Thr229, and His231 each contribute to the ATP site. Residues 248-260 (PLGAMRLTQRSSN) form a linker region. A KaiC 2 domain is found at 261–518 (VRVSSGVKTL…AKGMQDLESE (258 aa)). Residues Thr290, Gly291, Thr292, Gly293, Lys294, Thr295, and Leu296 each coordinate ATP. Mg(2+) is bound at residue Thr295. Glu318 lines the Mg(2+) pocket. Glu318 serves as the catalytic Proton acceptor in CII (KaiC 2). Trp331 provides a ligand contact to ATP. A Phosphoserine; by autocatalysis modification is found at Ser431. Thr432 carries the post-translational modification Phosphothreonine; by autocatalysis. Residues Arg451, Lys457, Met458, Arg459, Ser461, His463, and Lys465 each coordinate ATP. Residues 488 to 497 (GIISGTPTRI) form an A-loop, interacts with KaiA region.

This sequence belongs to the KaiC family. In terms of assembly, homohexamer resembling 2 stacked donuts rings with a central pore nearly blocked on one side; hexamerization is dependent on ATP-binding. Binds 2 ATP per monomer, at the subunit interface on each ring. The KaiABC complex composition changes during the circadian cycle to control KaiC phosphorylation. Complexes KaiC(6), KaiA(2-4):KaiC(6), KaiB(6):KaiC(6) and KaiC(6):KaiB(6):KaiA(12) are among the most important forms, many form cooperatively. Interacts with SasA, probably as 1 SasA trimer:1 KaiC homohexamer, has highest affinity for unphosphorylated SasA. The CI domain binds to KaiB and SasA; as they have a similar fold they compete for the same site on CI. KaiB assumes a thioredoxin-like form called KaiB(fs) when bound to KaiC. Mg(2+) is required as a cofactor. Phosphorylated on serine/threonine residues by autocatalysis. Both phosphorylated and unphosphorylated forms exist. Both autophosphorylates and autodephosphorylates. Phosphorylated form correlates with clock speed. In terms of processing, phosphorylated on serine and threonine residues by autocatalysis. Has a 4 step phosphorylation cycle; the autokinase acts first on Thr-432, then Ser-431. When Ser-431 is modified KaiC switches to an autophosphatase mode, acting first on phospho-Thr-432 then phospho-Ser-431.

The enzyme catalyses L-seryl-[protein] + ATP = O-phospho-L-seryl-[protein] + ADP + H(+). It catalyses the reaction L-threonyl-[protein] + ATP = O-phospho-L-threonyl-[protein] + ADP + H(+). It carries out the reaction ATP + H2O = ADP + phosphate + H(+). With respect to regulation, the interaction with KaiA enhances its phosphorylation status, while the interaction with KaiB decreases it. Functionally, central component of the KaiABC oscillator complex, which constitutes the main circadian regulator in cyanobacteria. Complex composition changes during the circadian cycle to control KaiC phosphorylation. KaiA stimulates KaiC autophosphorylation, while KaiB sequesters KaiA, leading to KaiC autodephosphorylation. Clock output pathways impact the RpaA transcriptional regulator. KaiC enhances the autophosphorylation activity of SasA, which then transfers its phosphate group to RpaA to activate it. KaiB and KaiC together enhance the phospho-RpaA dephosphatase activity of CikA. Stimulates SasA autophosphorylation. Fully phosphorylated KaiC (tested with phosphomimetic Asp-431-432-Asp) is the best stimulant, requires the ATPase activity of the CII domain. Unphosphorylated SasA associates with KaiC and its autophosphorylation activity is enhanced. Phospho-SasA is released and associates with RpaA, transferring its phosphate group. Formation of the KaiA:KaiB complex is promoted by KaiC, helping switch KaiC from its autophosphorylation to autodephosphatase function. Its function is as follows. Has a weak, temperature-independent ATPase activity (about 14 molecules of ATP per day) that defines the circadian period. ATPase activity is mostly contributed by the CI domain; the CII domain augments the activity. The addition of KaiA increases activity. ATPase is inhibited during the KaiC phosphorylating phase and activated during the KaiC dephosphorylating phase. The protein is Circadian clock oscillator protein KaiC of Thermosynechococcus vestitus (strain NIES-2133 / IAM M-273 / BP-1).